A 308-amino-acid polypeptide reads, in one-letter code: Cap-specific mRNA (nucleoside-2'-O-)-methyltransferase (308 aa).

Tyrosine 30 contributes to the mRNA binding site. S-adenosyl-L-methionine is bound by residues glutamine 46, tyrosine 74, glycine 76, glycine 80, aspartate 103, arginine 105, valine 124, and aspartate 147. The tract at residues 177-257 (PIASSLKWRC…NTKIRPKIVL (81 aa)) is binding to NPH-I. Lysine 183 acts as the For methyltransferase activity in catalysis. MRNA is bound by residues 185–188 (RCPF), aspartate 190, 213–215 (SAE), and glutamate 241.

Belongs to the class I-like SAM-binding methyltransferase superfamily. Poxvirus/kinetoplastid 2'-O-MTase family. Interacts with poly(A) polymerase catalytic subunit OPG063. Interacts with OPG109 and OPG123; these interactions might help linking transcription to capping and polyadenylation.

The protein localises to the virion. It carries out the reaction a 5'-end (N(7)-methyl 5'-triphosphoguanosine)-ribonucleoside in mRNA + S-adenosyl-L-methionine = a 5'-end (N(7)-methyl 5'-triphosphoguanosine)-(2'-O-methyl-ribonucleoside) in mRNA + S-adenosyl-L-homocysteine + H(+). Its function is as follows. Displays methyltransferase, positive regulation of the poly(A) polymerase and transcription elongation activities. Involved in the modification of both mRNA ends and in intermediate and late gene positive transcription elongation. At the mRNAs 5' end, methylates the ribose 2' OH group of the first transcribed nucleotide, thereby producing a 2'-O-methylpurine cap. At the 3' end, functions as a processivity factor which stimulates the activity of the viral poly(A) polymerase OPG063 that creates mRNA's poly(A) tail. In the presence of OPG102, OPG063 does not dissociate from the RNA allowing tail elongation to around 250 adenylates. The chain is Cap-specific mRNA (nucleoside-2'-O-)-methyltransferase (OPG102) from Fowlpox virus (strain NVSL) (FPV).